The sequence spans 507 residues: ATP synthase subunit alpha 2 (507 aa).

G171 to T178 lines the ATP pocket.

The protein belongs to the ATPase alpha/beta chains family. In terms of assembly, F-type ATPases have 2 components, CF(1) - the catalytic core - and CF(0) - the membrane proton channel. CF(1) has five subunits: alpha(3), beta(3), gamma(1), delta(1), epsilon(1). CF(0) has three main subunits: a(1), b(2) and c(9-12). The alpha and beta chains form an alternating ring which encloses part of the gamma chain. CF(1) is attached to CF(0) by a central stalk formed by the gamma and epsilon chains, while a peripheral stalk is formed by the delta and b chains.

The protein localises to the cell inner membrane. The catalysed reaction is ATP + H2O + 4 H(+)(in) = ADP + phosphate + 5 H(+)(out). Produces ATP from ADP in the presence of a proton gradient across the membrane. The alpha chain is a regulatory subunit. The protein is ATP synthase subunit alpha 2 of Gluconobacter oxydans (strain 621H) (Gluconobacter suboxydans).